A 98-amino-acid polypeptide reads, in one-letter code: uncharacterized protein (98 aa).

Residues 19 to 31 show a composition bias toward basic residues; sequence RRMSKRSKNKAKK. A disordered region spans residues 19–47; it reads RRMSKRSKNKAKKERVPVEDRPPTPMPTS.

The protein belongs to the lymphocryptovirus BNLF2B family.

This is an uncharacterized protein from Epstein-Barr virus (strain AG876) (HHV-4).